The sequence spans 386 residues: Sulfate adenylyltransferase (386 aa).

It belongs to the sulfate adenylyltransferase family.

It carries out the reaction sulfate + ATP + H(+) = adenosine 5'-phosphosulfate + diphosphate. Its pathway is sulfur metabolism; hydrogen sulfide biosynthesis; sulfite from sulfate: step 1/3. This Persephonella marina (strain DSM 14350 / EX-H1) protein is Sulfate adenylyltransferase.